Reading from the N-terminus, the 194-residue chain is Large ribosomal subunit protein eL15 (194 aa).

A compositionally biased stretch (basic residues) spans Lys-162–His-173. The tract at residues Lys-162–Lys-194 is disordered. Polar residues predominate over residues Ser-185 to Lys-194.

It belongs to the eukaryotic ribosomal protein eL15 family.

In Methanocorpusculum labreanum (strain ATCC 43576 / DSM 4855 / Z), this protein is Large ribosomal subunit protein eL15.